The following is a 312-amino-acid chain: tRNA uridine(34) hydroxylase (312 aa).

The region spanning 130-225 (RGDEVVFFDG…YGEQFGNKGL (96 aa)) is the Rhodanese domain. C185 serves as the catalytic Cysteine persulfide intermediate.

The protein belongs to the TrhO family.

The catalysed reaction is uridine(34) in tRNA + AH2 + O2 = 5-hydroxyuridine(34) in tRNA + A + H2O. Functionally, catalyzes oxygen-dependent 5-hydroxyuridine (ho5U) modification at position 34 in tRNAs. This chain is tRNA uridine(34) hydroxylase, found in Corynebacterium glutamicum (strain ATCC 13032 / DSM 20300 / JCM 1318 / BCRC 11384 / CCUG 27702 / LMG 3730 / NBRC 12168 / NCIMB 10025 / NRRL B-2784 / 534).